The chain runs to 166 residues: uncharacterized protein (166 aa).

A helical transmembrane segment spans residues 34-54 (FWGKVLVLTFGIICVVFVIFM). 2 disordered regions span residues 73–93 (QRTQHSIHRRERSSSGASQQF) and 123–166 (TSTP…NDEV).

The protein resides in the vacuole membrane. This is an uncharacterized protein from Schizosaccharomyces pombe (strain 972 / ATCC 24843) (Fission yeast).